We begin with the raw amino-acid sequence, 812 residues long: Axin-2 (812 aa).

The interval 1–43 (MNRTLTDPMVSSFREDDPRPPVPGEEGETTCHHPSKLAMMRPK) is disordered. The region spanning 84–203 (SLHFLLGDQD…LTSDIYLEYV (120 aa)) is the RGS domain. Disordered stretches follow at residues 275-326 (SYRR…AIPP), 388-430 (ETMS…TCEE), 446-484 (TPGCQSPGLLRHSPRSRSPEQRPLPRGGLSTRSQSSSMN), and 609-726 (RQTK…SGCH). The span at 285-303 (NRFTSGYSFAPATSANDSE) shows a compositional bias: polar residues. Residues 305 to 323 (SSDALTDDSMSMTDSSVDA) are compositionally biased toward low complexity. Residues 329–415 (LGSKKQLQRE…RDESEMSSSS (87 aa)) are interaction with GSK3B. Residues 388–397 (ETMSSLEERL) are compositionally biased toward basic and acidic residues. Residues 401–410 (QEEEERDESE) are compositionally biased toward acidic residues. Residues 411–421 (MSSSSASHSLP) show a composition bias toward low complexity. Residues 415–467 (SASHSLPLLPPGTCEEDPQAILDEHLSRVLKTPGCQSPGLLRHSPRSRSPEQR) form an interaction with beta-catenin region. Residues 475 to 484 (STRSQSSSMN) show a composition bias toward polar residues. The span at 672–683 (EEARRRLEEVSK) shows a compositional bias: basic and acidic residues. One can recognise a DIX domain in the interval 730–812 (GSETVVTYFF…KILGKVDRMD (83 aa)).

As to quaternary structure, interacts with hwa; leading to promote the tankyrase-mediated degradation of axin1. Post-translationally, ADP-ribosylated by tankyrase tnks and tnks2. Poly-ADP-ribosylated protein is recognized by rnf146, followed by ubiquitination and subsequent activation of the Wnt signaling pathway. Ubiquitinated by rnf146 when poly-ADP-ribosylated, leading to its degradation and subsequent activation of the Wnt signaling pathway.

Its subcellular location is the cytoplasm. In terms of biological role, component of the beta-catenin destruction complex required for regulating ctnnb1 levels through phosphorylation and ubiquitination, and modulating Wnt-signaling. Controls dorsoventral patterning by down-regulating ctnnb1 to inhibit the Wnt signaling pathway and ventralize embryos. This is Axin-2 (axin2) from Danio rerio (Zebrafish).